Reading from the N-terminus, the 233-residue chain is Orotidine 5'-phosphate decarboxylase (233 aa).

Substrate-binding positions include Asp-13, Lys-35, Asp-62–Thr-71, Thr-122, Arg-182, Gln-191, Gly-211, and Arg-212. Residue Lys-64 is the Proton donor of the active site.

This sequence belongs to the OMP decarboxylase family. Type 1 subfamily. Homodimer.

It catalyses the reaction orotidine 5'-phosphate + H(+) = UMP + CO2. The protein operates within pyrimidine metabolism; UMP biosynthesis via de novo pathway; UMP from orotate: step 2/2. In terms of biological role, catalyzes the decarboxylation of orotidine 5'-monophosphate (OMP) to uridine 5'-monophosphate (UMP). This chain is Orotidine 5'-phosphate decarboxylase, found in Pseudomonas putida (strain W619).